A 1201-amino-acid chain; its full sequence is DNA-directed RNA polymerase subunit beta' (1201 aa).

Residues C60, C62, C75, and C78 each coordinate Zn(2+). Mg(2+) contacts are provided by D449, D451, and D453. The Zn(2+) site is built by C818, C892, C899, and C902.

Belongs to the RNA polymerase beta' chain family. The RNAP catalytic core consists of 2 alpha, 1 beta, 1 beta' and 1 omega subunit. When a sigma factor is associated with the core the holoenzyme is formed, which can initiate transcription. Mg(2+) is required as a cofactor. The cofactor is Zn(2+).

It carries out the reaction RNA(n) + a ribonucleoside 5'-triphosphate = RNA(n+1) + diphosphate. In terms of biological role, DNA-dependent RNA polymerase catalyzes the transcription of DNA into RNA using the four ribonucleoside triphosphates as substrates. The sequence is that of DNA-directed RNA polymerase subunit beta' from Listeria welshimeri serovar 6b (strain ATCC 35897 / DSM 20650 / CCUG 15529 / CIP 8149 / NCTC 11857 / SLCC 5334 / V8).